The primary structure comprises 279 residues: tRNA (carboxymethyluridine(34)-5-O)-methyltransferase (279 aa).

Residues 172–236 (KSKSKPKTKS…QQQDQEQERE (65 aa)) are disordered. Residues 200–229 (PKERSEYLQRWKEEQQRSKSLDDNDEKQQQ) are compositionally biased toward basic and acidic residues.

In terms of assembly, interacts with TRM112.

The protein resides in the cytoplasm. Its subcellular location is the nucleus. It catalyses the reaction 5-(carboxymethyl)uridine(34) in tRNA + S-adenosyl-L-methionine = 5-(2-methoxy-2-oxoethyl)uridine(34) in tRNA + S-adenosyl-L-homocysteine. In terms of biological role, required for the methylation of the wobble bases at position 34 in tRNA. Appears to have a role in stress-response. The protein is tRNA (carboxymethyluridine(34)-5-O)-methyltransferase (TRM9) of Saccharomyces cerevisiae (strain ATCC 204508 / S288c) (Baker's yeast).